Here is a 517-residue protein sequence, read N- to C-terminus: Diacylglycerol O-acyltransferase 1C (517 aa).

A disordered region spans residues 1–82 (MAISDVPAAA…NVGAAANDAG (82 aa)). The span at 8–17 (AAAGTTATTT) shows a compositional bias: low complexity. The segment covering 53-64 (ITDDDNIKDHKP) has biased composition (basic and acidic residues). A compositionally biased stretch (low complexity) spans 71–81 (DDNVGAAANDA). 7 helical membrane-spanning segments follow: residues 121 to 141 (HAGL…RLII), 165 to 185 (WPLF…FVVE), 197 to 217 (VVVL…VLVI), 222 to 242 (SAFV…LKLV), 272 to 292 (YPYT…TLCY), 305 to 325 (GWVF…GFII), and 361 to 381 (VWLC…AELV). The FYXDWWN motif motif lies at 388–394 (FYKDWWN). The next 3 membrane-spanning stretches (helical) occupy residues 429 to 449 (GAAS…CIAV), 451 to 471 (CHMF…LVLI), and 484 to 504 (VGNM…SVLL). Histidine 443 is an active-site residue.

The protein belongs to the membrane-bound acyltransferase family. Sterol o-acyltransferase subfamily.

The protein localises to the endoplasmic reticulum membrane. It carries out the reaction an acyl-CoA + a 1,2-diacyl-sn-glycerol = a triacyl-sn-glycerol + CoA. It participates in glycerolipid metabolism; triacylglycerol biosynthesis. Functionally, involved in triacylglycerol (TAG) synthesis. Catalyzes the acylation of the sn-3 hydroxy group of sn-1,2-diacylglycerol using acyl-CoA. In Glycine max (Soybean), this protein is Diacylglycerol O-acyltransferase 1C.